Consider the following 391-residue polypeptide: Putative gustatory receptor 36b (391 aa).

Residues 1-4 (MVDW) lie on the Cytoplasmic side of the membrane. A helical transmembrane segment spans residues 5–25 (VVLLLKAVHIYCYLIGLSNFE). At 26 to 39 (FDCRTGRVFKSRRC) the chain is on the extracellular side. Residues 40 to 60 (TIYAFMANIFILITIIYNFTA) form a helical membrane-spanning segment. Topologically, residues 61–74 (HGDTNLLFQSANKL) are cytoplasmic. The helical transmembrane segment at 75-95 (HEYVIIIMSGLKIVAGLITVL) threads the bilayer. Residues 96 to 127 (NRWLQRGQMMQLVKDVIRLYMINPQLKSMIRW) lie on the Extracellular side of the membrane. The chain crosses the membrane as a helical span at residues 128-148 (GILLKAFISFAIELLQVTLSV). Residues 149–165 (DALDRQGTAEMMGLLVK) lie on the Cytoplasmic side of the membrane. The chain crosses the membrane as a helical span at residues 166-186 (LCVSFIMNLAISQHFLVILLI). Residues 187–284 (RAQYRIMNAK…YKYGPHNLKL (98 aa)) lie on the Extracellular side of the membrane. The helical transmembrane segment at 285–305 (SAKTSIIVCILITLFYLDALV) threads the bilayer. Over 306–363 (NCNNMLRVLDHHKDFLGLLEERTVFASSLDIRLEESFESLQLQLARNPLKINVMGMFP) the chain is Cytoplasmic. A helical transmembrane segment spans residues 364-384 (ITRGSTAAMCASVIVNSIFLI). At 385 to 391 (QFDMEFF) the chain is on the extracellular side.

This sequence belongs to the insect chemoreceptor superfamily. Gustatory receptor (GR) family. Gr22e subfamily. In terms of tissue distribution, expressed in neurons of the terminal external chemosensory organ of larvae.

Its subcellular location is the cell membrane. In terms of biological role, probable gustatory receptor which mediates acceptance or avoidance behavior, depending on its substrates. The polypeptide is Putative gustatory receptor 36b (Gr36b) (Drosophila melanogaster (Fruit fly)).